Consider the following 754-residue polypeptide: Phosphoinositide 3-kinase regulatory subunit 6 (754 aa).

Positions 343–363 are disordered; sequence ERDLPTGADELPAPGSPEMER.

Heterodimer of a catalytic subunit (PIK3CG) and a regulatory (PIK3R6) subunit. The binding of PIK3R6 to PIK3CG may exclude the binding of PIK3R5 to PIK3CG. Interacts with beta-gamma G protein dimers. Interacts with PDE3B and RAPGEF3; form a signaling complex that regulates phosphatidylinositol 3-kinase gamma in angiogenesis.

Its subcellular location is the cytoplasm. It localises to the cell membrane. Its function is as follows. Regulatory subunit of the PI3K gamma complex. Acts as an adapter to drive activation of PIK3CG by beta-gamma G protein dimers. The PIK3CG:PIK3R6 heterodimer is much less sensitive to beta-gamma G protein dimers than PIK3CG:PIK3R5 and its membrane recruitment and beta-gamma G protein dimer-dependent activation requires HRAS bound to PIK3CG. Recruits of the PI3K gamma complex to a PDE3B:RAPGEF3 signaling complex involved in angiogenesis; signaling seems to involve RRAS. The chain is Phosphoinositide 3-kinase regulatory subunit 6 (PIK3R6) from Homo sapiens (Human).